We begin with the raw amino-acid sequence, 469 residues long: E3 ubiquitin-protein ligase TRIM21 (469 aa).

The segment at 16 to 55 (CSICLDPMVEPMSIECGHSFCQECISEVGKEGGSVCPVCR) adopts an RING-type zinc-finger fold. The B box-type zinc-finger motif lies at 87 to 128 (PHGELCVVHREKIHLFCEEDGKALCWVCSQSQKHRDHPMVPI). Residues Cys-92, His-95, Cys-114, and His-120 each coordinate Zn(2+). Residues 128-245 (IEEAAQEYQE…RRGSALELLQ (118 aa)) are a coiled coil. Residue Ser-266 is modified to Phosphoserine. Residues 268 to 467 (DLRNVFYVPG…APLILCPLKT (200 aa)) enclose the B30.2/SPRY domain.

This sequence belongs to the TRIM/RBCC family. Homotrimer. Interacts (via C-terminus) with IRF8 (via C-terminus). Component of a SCF(SKP2)-like complex containing CUL1, SKP1, TRIM21 and SKP2. Interacts with CALR, CUL1, FBXW11, HSPA5, IKBKB, IRF3, SKP1 and VCP. Interacts with SKP2; the interaction with SKP2 does not depend on an intact F-box domain. Interacts (via N-terminus and C-terminus) with DCP2 (via N-terminus and C-terminus). Interacts with ULK1, BECN1 and with ATG8 family members, including GABARAP, GABARAPL1, GABARAPL2 and MAP1LC3C/LC3C. Interacts with TRIM21 and SQSTM1/sequestosome 1. Interacts with IRF3. Interacts (via the SPRY domain) with NMI (via coiled-coil domain); the interaction promotes 'Lys-63'-linked ubiquitination of NMI. Interacts with IFI35 and NMI; the interaction facilitates NMI-IFI35 complex formation. Post-translationally, autoubiquitinated; does not lead to its proteasomal degradation. Deubiquitinated by USP4; leading to its stabilization.

It is found in the cytoplasm. The protein resides in the cytoplasmic vesicle. The protein localises to the autophagosome. Its subcellular location is the nucleus. It localises to the P-body. It is found in the stress granule. The catalysed reaction is S-ubiquitinyl-[E2 ubiquitin-conjugating enzyme]-L-cysteine + [acceptor protein]-L-lysine = [E2 ubiquitin-conjugating enzyme]-L-cysteine + N(6)-ubiquitinyl-[acceptor protein]-L-lysine.. Its pathway is protein modification; protein ubiquitination. In terms of biological role, E3 ubiquitin-protein ligase whose activity is dependent on E2 enzymes, UBE2D1, UBE2D2, UBE2E1 and UBE2E2. Forms a ubiquitin ligase complex in cooperation with the E2 UBE2D2 that is used not only for the ubiquitination of USP4 and IKBKB but also for its self-ubiquitination. Component of cullin-RING-based SCF (SKP1-CUL1-F-box protein) E3 ubiquitin-protein ligase complexes such as SCF(SKP2)-like complexes. A TRIM21-containing SCF(SKP2)-like complex is shown to mediate ubiquitination of CDKN1B ('Thr-187' phosphorylated-form), thereby promoting its degradation by the proteasome. Monoubiquitinates IKBKB that will negatively regulates Tax-induced NF-kappa-B signaling. Negatively regulates IFN-beta production post-pathogen recognition by catalyzing polyubiquitin-mediated degradation of IRF3. Mediates the ubiquitin-mediated proteasomal degradation of IgG1 heavy chain, which is linked to the VCP-mediated ER-associated degradation (ERAD) pathway. Promotes IRF8 ubiquitination, which enhanced the ability of IRF8 to stimulate cytokine genes transcription in macrophages. Plays a role in the regulation of the cell cycle progression. Enhances the decapping activity of DCP2. Exists as a ribonucleoprotein particle present in all mammalian cells studied and composed of a single polypeptide and one of four small RNA molecules. At least two isoforms are present in nucleated and red blood cells, and tissue specific differences in RO/SSA proteins have been identified. The common feature of these proteins is their ability to bind HY RNAs.2. Involved in the regulation of innate immunity and the inflammatory response in response to IFNG/IFN-gamma. Organizes autophagic machinery by serving as a platform for the assembly of ULK1, Beclin 1/BECN1 and ATG8 family members and recognizes specific autophagy targets, thus coordinating target recognition with assembly of the autophagic apparatus and initiation of autophagy. Also regulates autophagy through FIP200/RB1CC1 ubiquitination and subsequent decreased protein stability. Represses the innate antiviral response by facilitating the formation of the NMI-IFI35 complex through 'Lys-63'-linked ubiquitination of NMI. During viral infection, promotes cell pyroptosis by mediating 'Lys-6'-linked ubiquitination of ISG12a/IFI27, facilitating its translocation into the mitochondria and subsequent CASP3 activation. When up-regulated through the IFN/JAK/STAT signaling pathway, promotes 'Lys-27'-linked ubiquitination of MAVS, leading to the recruitment of TBK1 and up-regulation of innate immunity. Mediates 'Lys-63'-linked polyubiquitination of G3BP1 in response to heat shock, leading to stress granule disassembly. The sequence is that of E3 ubiquitin-protein ligase TRIM21 (TRIM21) from Bos taurus (Bovine).